The chain runs to 622 residues: Serine/threonine-protein kinase MAK (622 aa).

The Protein kinase domain occupies 4–284 (YTTMRQLGDG…ASQALKHPYF (281 aa)). Residues 10 to 18 (LGDGTYGSV) and lysine 33 contribute to the ATP site. The active-site Proton acceptor is aspartate 125. Threonine 157 is subject to Phosphothreonine; by autocatalysis. Tyrosine 159 carries the phosphotyrosine; by autocatalysis modification. A disordered region spans residues 301–373 (QTLHKQLQPP…HHKQPQTMFP (73 aa)).

The protein belongs to the protein kinase superfamily. CMGC Ser/Thr protein kinase family. CDC2/CDKX subfamily. Interacts with RP1. Interacts with AR and CDK20. Found in a complex containing MAK, AR and NCOA3. Interacts with FZR1 (via WD repeats). It depends on Mg(2+) as a cofactor. In terms of processing, autophosphorylated. Phosphorylated on serine and threonine residues. As to expression, expressed mainly in testicular cells at and after meiosis.

The protein localises to the nucleus. The protein resides in the cytoplasm. It is found in the cytoskeleton. Its subcellular location is the microtubule organizing center. It localises to the centrosome. The protein localises to the spindle. The protein resides in the midbody. It is found in the cell projection. Its subcellular location is the cilium. It localises to the photoreceptor outer segment. The protein localises to the photoreceptor inner segment. It catalyses the reaction L-seryl-[protein] + ATP = O-phospho-L-seryl-[protein] + ADP + H(+). It carries out the reaction L-threonyl-[protein] + ATP = O-phospho-L-threonyl-[protein] + ADP + H(+). Its function is as follows. Essential for the regulation of ciliary length and required for the long-term survival of photoreceptors. Could play an important function in spermatogenesis. Phosphorylates FZR1 in a cell cycle-dependent manner. Plays a role in the transcriptional coactivation of AR. This is Serine/threonine-protein kinase MAK (Mak) from Rattus norvegicus (Rat).